An 83-amino-acid chain; its full sequence is RNA-binding protein Hfq (83 aa).

The Sm domain occupies 9–69; the sequence is DQLLNTARKE…ISTIIPAKPI (61 aa).

This sequence belongs to the Hfq family. Homohexamer.

In terms of biological role, RNA chaperone that binds small regulatory RNA (sRNAs) and mRNAs to facilitate mRNA translational regulation in response to envelope stress, environmental stress and changes in metabolite concentrations. Also binds with high specificity to tRNAs. This Leptospira biflexa serovar Patoc (strain Patoc 1 / Ames) protein is RNA-binding protein Hfq.